A 789-amino-acid chain; its full sequence is Phenylalanine--tRNA ligase beta subunit (789 aa).

The tRNA-binding domain occupies 38 to 151 (KKHLQSFVVV…NTYNVGESFF (114 aa)). Positions 398–474 (HNDILLNFSP…RLYGYDKILE (77 aa)) constitute a B5 domain. Mg(2+) is bound by residues Asp452, Asp458, Glu461, and Glu462. One can recognise an FDX-ACB domain in the interval 694-787 (LRYQSVKRDF…ISKGFNGILR (94 aa)).

It belongs to the phenylalanyl-tRNA synthetase beta subunit family. Type 1 subfamily. In terms of assembly, tetramer of two alpha and two beta subunits. Mg(2+) is required as a cofactor.

It is found in the cytoplasm. The catalysed reaction is tRNA(Phe) + L-phenylalanine + ATP = L-phenylalanyl-tRNA(Phe) + AMP + diphosphate + H(+). The polypeptide is Phenylalanine--tRNA ligase beta subunit (Ehrlichia ruminantium (strain Welgevonden)).